Consider the following 295-residue polypeptide: Inositol polyphosphate multikinase IPK2 (295 aa).

A disordered region spans residues 1 to 21 (MASDLRPPEHQVAGHRASADK).

Belongs to the inositol phosphokinase (IPK) family.

It carries out the reaction 1D-myo-inositol 1,4,5-trisphosphate + 2 ATP = 1D-myo-inositol 1,3,4,5,6-pentakisphosphate + 2 ADP + 2 H(+). The catalysed reaction is 1D-myo-inositol 1,3,4,6-tetrakisphosphate + ATP = 1D-myo-inositol 1,3,4,5,6-pentakisphosphate + ADP + H(+). Inositol phosphate kinase with a broad substrate specificity. Phosphorylates inositol 1,4,5-trisphosphate (Ins(1,4,5)P3), inositol 1,4,5,6-tetrakisphosphate (Ins(1,4,5,6)P4), inositol 1,3,4,5-tetrakisphosphate (Ins(1,3,4,5)P4), inositol 1,3,4,6-tetrakisphosphate (Ins(1,3,4,6)P4) and inositol 1,2,3,4,6-pentakisphosphate (Ins(1,2,3,4,6)P5) but not inositol 1,4-bisphosphate (Ins(1,4)P2), inositol 1,3,4-trisphosphate (Ins(1,3,4)P3), inositol 1,2,6-trisphosphate (Ins(1,2,6)P3), inositol 3,4,5,6-tetrakisphosphate (Ins(3,4,5,6)P4), inositol 1,3,4,5,6-pentakisphosphate (Ins(1,3,4,5,6)P5), inositol 1,2,4,5,6-pentakisphosphate (Ins(1,2,4,5,6)P5) or inositol hexakisphosphate (InsP6). Regulates pollen and root development probably through the regulation of InsP3-mediated calcium accumulation. The sequence is that of Inositol polyphosphate multikinase IPK2 from Oryza sativa subsp. indica (Rice).